We begin with the raw amino-acid sequence, 615 residues long: MFS-type transporter 1 (615 aa).

The tract at residues 1-85 (MTALAAVPDL…GNNVSPHGRH (85 aa)) is disordered. A compositionally biased stretch (polar residues) spans 16 to 53 (PSTTTVHSPNYSGSPADISSSPTTRAVSRNTARQTASA). The N-linked (GlcNAc...) asparagine glycan is linked to Asn-25. 6 helical membrane passes run 94-114 (CLVI…SGIL), 138-158 (VYSL…HIIG), 162-182 (VWIT…RSAT), 192-212 (VLGV…TNGF), 222-242 (FAFQ…LGGI), and 251-271 (FGFY…LVVL). A glycan (N-linked (GlcNAc...) asparagine) is linked at Asn-302. The next 8 helical transmembrane spans lie at 320-340 (WTGT…FSVV), 351-371 (QNIA…LWVG), 397-417 (AAVF…ALYF), 432-452 (FLPM…LVET), 455-475 (VRWL…IMAL), 488-508 (FAML…NLII), 522-542 (AVFN…TAVV), and 585-605 (AAFW…FLGL).

This sequence belongs to the major facilitator superfamily. EmrB family.

Its subcellular location is the membrane. Functionally, MFS-type transporter; part of the gene cluster that mediates the biosynthesis of pyriculol and pyriculariol, two heptaketides that induce lesion formation upon application on rice leaves but are dispensable for pathogenicity. With the ABC transporter ABC7, is most likely responsible for pyriculol and pyriculariol secretion and thereby may contribute to intrinsic resistance. The sequence is that of MFS-type transporter 1 from Pyricularia oryzae (strain 70-15 / ATCC MYA-4617 / FGSC 8958) (Rice blast fungus).